The following is a 129-amino-acid chain: Glycine cleavage system H protein (129 aa).

The region spanning 24–106 (TYTVGITEHA…YAGGWIFKIK (83 aa)) is the Lipoyl-binding domain. Lys65 carries the post-translational modification N6-lipoyllysine.

It belongs to the GcvH family. The glycine cleavage system is composed of four proteins: P, T, L and H. (R)-lipoate is required as a cofactor.

In terms of biological role, the glycine cleavage system catalyzes the degradation of glycine. The H protein shuttles the methylamine group of glycine from the P protein to the T protein. The chain is Glycine cleavage system H protein from Escherichia coli O127:H6 (strain E2348/69 / EPEC).